Here is a 292-residue protein sequence, read N- to C-terminus: 1,4-dihydroxy-2-naphthoate octaprenyltransferase (292 aa).

Helical transmembrane passes span alanine 35–valine 55, alanine 101–isoleucine 121, glycine 137–glycine 157, valine 166–valine 186, leucine 220–valine 240, and threonine 271–leucine 291.

This sequence belongs to the MenA family. Type 1 subfamily. It depends on Mg(2+) as a cofactor.

It is found in the cell membrane. The catalysed reaction is an all-trans-polyprenyl diphosphate + 1,4-dihydroxy-2-naphthoate + H(+) = a 2-demethylmenaquinol + CO2 + diphosphate. It participates in quinol/quinone metabolism; menaquinone biosynthesis; menaquinol from 1,4-dihydroxy-2-naphthoate: step 1/2. Activity is abolished by EDTA. Inhibited by Ro 48-8071, which is non-competitive with regard to DHNA and competitive with regard to the isoprenyldiphosphate substrate. Conversion of 1,4-dihydroxy-2-naphthoate (DHNA) to demethylmenaquinone (DMK). Can use a variety of allylic isoprenyl diphosphates as substrates but has a requirement for at least three isoprene units. The protein is 1,4-dihydroxy-2-naphthoate octaprenyltransferase of Mycobacterium tuberculosis (strain ATCC 25618 / H37Rv).